Consider the following 175-residue polypeptide: Large ribosomal subunit protein uL10 (175 aa).

This sequence belongs to the universal ribosomal protein uL10 family. As to quaternary structure, part of the ribosomal stalk of the 50S ribosomal subunit. The N-terminus interacts with L11 and the large rRNA to form the base of the stalk. The C-terminus forms an elongated spine to which L12 dimers bind in a sequential fashion forming a multimeric L10(L12)X complex.

Functionally, forms part of the ribosomal stalk, playing a central role in the interaction of the ribosome with GTP-bound translation factors. This is Large ribosomal subunit protein uL10 from Synechococcus sp. (strain WH7803).